The following is a 1043-amino-acid chain: Probable inorganic carbon transporter subunit DabA (1043 aa).

4 residues coordinate Zn(2+): Cys460, Asp462, His719, and Cys734.

The protein belongs to the inorganic carbon transporter (TC 9.A.2) DabA family. In terms of assembly, forms a complex with DabB. Zn(2+) serves as cofactor.

It is found in the cell inner membrane. Functionally, part of an energy-coupled inorganic carbon pump. This Thiobacillus denitrificans (strain ATCC 25259 / T1) protein is Probable inorganic carbon transporter subunit DabA.